Here is a 369-residue protein sequence, read N- to C-terminus: UDP-N-acetylglucosamine--N-acetylmuramyl-(pentapeptide) pyrophosphoryl-undecaprenol N-acetylglucosamine transferase (369 aa).

Residues 10–12 (TGG), Asn-124, Arg-166, Ser-196, and Gln-300 each bind UDP-N-acetyl-alpha-D-glucosamine.

This sequence belongs to the glycosyltransferase 28 family. MurG subfamily.

The protein localises to the cell membrane. It catalyses the reaction di-trans,octa-cis-undecaprenyl diphospho-N-acetyl-alpha-D-muramoyl-L-alanyl-D-glutamyl-meso-2,6-diaminopimeloyl-D-alanyl-D-alanine + UDP-N-acetyl-alpha-D-glucosamine = di-trans,octa-cis-undecaprenyl diphospho-[N-acetyl-alpha-D-glucosaminyl-(1-&gt;4)]-N-acetyl-alpha-D-muramoyl-L-alanyl-D-glutamyl-meso-2,6-diaminopimeloyl-D-alanyl-D-alanine + UDP + H(+). It functions in the pathway cell wall biogenesis; peptidoglycan biosynthesis. Its function is as follows. Cell wall formation. Catalyzes the transfer of a GlcNAc subunit on undecaprenyl-pyrophosphoryl-MurNAc-pentapeptide (lipid intermediate I) to form undecaprenyl-pyrophosphoryl-MurNAc-(pentapeptide)GlcNAc (lipid intermediate II). In Desulfitobacterium hafniense (strain DSM 10664 / DCB-2), this protein is UDP-N-acetylglucosamine--N-acetylmuramyl-(pentapeptide) pyrophosphoryl-undecaprenol N-acetylglucosamine transferase.